The chain runs to 103 residues: Protein RALF-like 18 (103 aa).

Positions 1 to 32 are cleaved as a signal peptide; that stretch reads MMNNMKLLIIAVMIISAALLPALVVGSRPVKC. The propeptide at 33-58 is removed in mature form; that stretch reads DNCMDGGEKEEIMKMSSGVDVSHRIL. A disulfide bridge connects residues Cys-92 and Cys-98.

It belongs to the plant rapid alkalinization factor (RALF) family. Proteolytically cleaved, probably by S1P, a subtilisin-like serine protease (subtilase).

It is found in the secreted. In terms of biological role, cell signaling peptide that may regulate plant stress, growth, and development. Mediates a rapid alkalinization of extracellular space by mediating a transient increase in the cytoplasmic Ca(2+) concentration leading to a calcium-dependent signaling events through a cell surface receptor and a concomitant activation of some intracellular mitogen-activated protein kinases. In Arabidopsis thaliana (Mouse-ear cress), this protein is Protein RALF-like 18 (RALFL18).